Reading from the N-terminus, the 307-residue chain is UDP-3-O-acyl-N-acetylglucosamine deacetylase (307 aa).

3 residues coordinate Zn(2+): His78, His241, and Asp245. Residue His268 is the Proton donor of the active site.

It belongs to the LpxC family. Requires Zn(2+) as cofactor.

The enzyme catalyses a UDP-3-O-[(3R)-3-hydroxyacyl]-N-acetyl-alpha-D-glucosamine + H2O = a UDP-3-O-[(3R)-3-hydroxyacyl]-alpha-D-glucosamine + acetate. It functions in the pathway glycolipid biosynthesis; lipid IV(A) biosynthesis; lipid IV(A) from (3R)-3-hydroxytetradecanoyl-[acyl-carrier-protein] and UDP-N-acetyl-alpha-D-glucosamine: step 2/6. In terms of biological role, catalyzes the hydrolysis of UDP-3-O-myristoyl-N-acetylglucosamine to form UDP-3-O-myristoylglucosamine and acetate, the committed step in lipid A biosynthesis. In Acidovorax ebreus (strain TPSY) (Diaphorobacter sp. (strain TPSY)), this protein is UDP-3-O-acyl-N-acetylglucosamine deacetylase.